The primary structure comprises 99 residues: U8-agatoxin-Ao1a (99 aa).

The first 19 residues, 1 to 19 (MKSLLFVTIAVYFVAQAVT), serve as a signal peptide directing secretion. Residues 20–45 (ANLLSNFLGSSLIDDDKGNMHKLYKR) constitute a propeptide that is removed on maturation.

This sequence belongs to the neurotoxin 02 (plectoxin) family. In terms of processing, contains 5 disulfide bonds. Expressed by the venom gland.

It localises to the secreted. This Agelena orientalis (Funnel-web spider) protein is U8-agatoxin-Ao1a.